We begin with the raw amino-acid sequence, 294 residues long: MNQTTIAKEVKGIGIGLHKGEPISIKLEPLEAGSGIVFYRSDLGISYEAKPENVIDTQMATVIGDHRGYVSTIEHLMSAINAYGIDNVRIVLDANEAPVMDGSSIGFCMMLEEAGIKELDVAKKILVIKKSVEVKEGNKFVRLSPTDMPIINYTIEFDNPIIGKQNYCFEFSKQNYIEQIARARTFGFLKDVQALRAMNLGLGGSLENAVVIDDNRILNPEGLRFKDEFVRHKILDAIGDLTLLGCRVFGDYTSYAGSHKLNHLLTKELLKDPSAYEVVSLEKSTYKVYEKVFA.

Zn(2+) is bound by residues H75, H232, and D236. H259 acts as the Proton donor in catalysis.

This sequence belongs to the LpxC family. Zn(2+) serves as cofactor.

The enzyme catalyses a UDP-3-O-[(3R)-3-hydroxyacyl]-N-acetyl-alpha-D-glucosamine + H2O = a UDP-3-O-[(3R)-3-hydroxyacyl]-alpha-D-glucosamine + acetate. It participates in glycolipid biosynthesis; lipid IV(A) biosynthesis; lipid IV(A) from (3R)-3-hydroxytetradecanoyl-[acyl-carrier-protein] and UDP-N-acetyl-alpha-D-glucosamine: step 2/6. Its function is as follows. Catalyzes the hydrolysis of UDP-3-O-myristoyl-N-acetylglucosamine to form UDP-3-O-myristoylglucosamine and acetate, the committed step in lipid A biosynthesis. In Campylobacter lari (strain RM2100 / D67 / ATCC BAA-1060), this protein is UDP-3-O-acyl-N-acetylglucosamine deacetylase.